Here is a 162-residue protein sequence, read N- to C-terminus: Large ribosomal subunit protein uL30 (162 aa).

This sequence belongs to the universal ribosomal protein uL30 family. In terms of assembly, part of the 50S ribosomal subunit.

In Desulfurococcus amylolyticus (strain DSM 18924 / JCM 16383 / VKM B-2413 / 1221n) (Desulfurococcus kamchatkensis), this protein is Large ribosomal subunit protein uL30.